The sequence spans 239 residues: Small ribosomal subunit protein uS5 (239 aa).

The interval 1–62 is disordered; it reads MADETEIQAA…DDRRGSEEQG (62 aa). The segment covering 9-19 has biased composition (low complexity); it reads AAAPAEAAPGA. The span at 34 to 62 shows a compositional bias: basic and acidic residues; sequence GGNDRGGDRGRGRDGRGRRDDRRGSEEQG. The region spanning 65-128 is the S5 DRBM domain; it reads LIEKLVHINR…AAAKKAMVRV (64 aa).

Belongs to the universal ribosomal protein uS5 family. Part of the 30S ribosomal subunit. Contacts proteins S4 and S8.

In terms of biological role, with S4 and S12 plays an important role in translational accuracy. Located at the back of the 30S subunit body where it stabilizes the conformation of the head with respect to the body. This Rhizorhabdus wittichii (strain DSM 6014 / CCUG 31198 / JCM 15750 / NBRC 105917 / EY 4224 / RW1) (Sphingomonas wittichii) protein is Small ribosomal subunit protein uS5.